Here is a 125-residue protein sequence, read N- to C-terminus: Small ribosomal subunit protein eS8 (125 aa).

Belongs to the eukaryotic ribosomal protein eS8 family. In terms of assembly, part of the 30S ribosomal subunit.

This chain is Small ribosomal subunit protein eS8, found in Methanosphaerula palustris (strain ATCC BAA-1556 / DSM 19958 / E1-9c).